Consider the following 179-residue polypeptide: Large ribosomal subunit protein uL6 (179 aa).

Belongs to the universal ribosomal protein uL6 family. In terms of assembly, part of the 50S ribosomal subunit.

This protein binds to the 23S rRNA, and is important in its secondary structure. It is located near the subunit interface in the base of the L7/L12 stalk, and near the tRNA binding site of the peptidyltransferase center. This Clostridium acetobutylicum (strain ATCC 824 / DSM 792 / JCM 1419 / IAM 19013 / LMG 5710 / NBRC 13948 / NRRL B-527 / VKM B-1787 / 2291 / W) protein is Large ribosomal subunit protein uL6.